We begin with the raw amino-acid sequence, 349 residues long: Protein-glutamate methylesterase/protein-glutamine glutaminase (349 aa).

Positions 5-122 (RVLSVDDSAL…REGMLAYSEM (118 aa)) constitute a Response regulatory domain. 4-aspartylphosphate is present on Asp-56. The 193-residue stretch at 152–344 (LLSSEKLIAI…QQMLAKISAG (193 aa)) folds into the CheB-type methylesterase domain. Residues Ser-164, His-190, and Asp-286 contribute to the active site.

This sequence belongs to the CheB family. Phosphorylated by CheA. Phosphorylation of the N-terminal regulatory domain activates the methylesterase activity.

It is found in the cytoplasm. The enzyme catalyses [protein]-L-glutamate 5-O-methyl ester + H2O = L-glutamyl-[protein] + methanol + H(+). It carries out the reaction L-glutaminyl-[protein] + H2O = L-glutamyl-[protein] + NH4(+). In terms of biological role, involved in chemotaxis. Part of a chemotaxis signal transduction system that modulates chemotaxis in response to various stimuli. Catalyzes the demethylation of specific methylglutamate residues introduced into the chemoreceptors (methyl-accepting chemotaxis proteins or MCP) by CheR. Also mediates the irreversible deamidation of specific glutamine residues to glutamic acid. This Escherichia coli O157:H7 protein is Protein-glutamate methylesterase/protein-glutamine glutaminase.